A 270-amino-acid chain; its full sequence is Transcription factor bHLH113 (270 aa).

The disordered stretch occupies residues 109-153; that stretch reads CTVDKSTKSSTKKRTGTGNGQESDQNRKPGKKGKRNQEKSSVGIA. The 50-residue stretch at 144–193 folds into the bHLH domain; it reads NQEKSSVGIAKVRKERLGERIAALQQLVSPYGKTDAASVLHEAMGYIKFL.

In terms of assembly, homodimer.

The protein localises to the nucleus. The protein is Transcription factor bHLH113 (BHLH113) of Arabidopsis thaliana (Mouse-ear cress).